We begin with the raw amino-acid sequence, 771 residues long: Phosphoglycerate kinase (771 aa).

Positions 1-406 (MKKLITDLNL…PGIDAIQNYE (406 aa)) are phosphoglycerate kinase. Residues 20 to 22 (DLN), arginine 35, 58 to 61 (HLGR), arginine 118, and arginine 155 each bind substrate. Residues lysine 206, glycine 295, glutamate 334, and 361 to 364 (GGDS) contribute to the ATP site. The unknown stretch occupies residues 407–771 (QTYEQYDSQV…KRFWFFGRKR (365 aa)).

It in the N-terminal section; belongs to the phosphoglycerate kinase family. As to quaternary structure, monomer.

The protein localises to the cytoplasm. It catalyses the reaction (2R)-3-phosphoglycerate + ATP = (2R)-3-phospho-glyceroyl phosphate + ADP. Its pathway is carbohydrate degradation; glycolysis; pyruvate from D-glyceraldehyde 3-phosphate: step 2/5. The polypeptide is Phosphoglycerate kinase (pgk) (Mycoplasmopsis pulmonis (strain UAB CTIP) (Mycoplasma pulmonis)).